The following is a 101-amino-acid chain: Small ribosomal subunit protein uS10 (101 aa).

The protein belongs to the universal ribosomal protein uS10 family. As to quaternary structure, part of the 30S ribosomal subunit.

Functionally, involved in the binding of tRNA to the ribosomes. The protein is Small ribosomal subunit protein uS10 of Corynebacterium efficiens (strain DSM 44549 / YS-314 / AJ 12310 / JCM 11189 / NBRC 100395).